A 233-amino-acid polypeptide reads, in one-letter code: Putative N-acetylmannosamine-6-phosphate 2-epimerase (233 aa).

Belongs to the NanE family.

It carries out the reaction an N-acyl-D-glucosamine 6-phosphate = an N-acyl-D-mannosamine 6-phosphate. It participates in amino-sugar metabolism; N-acetylneuraminate degradation; D-fructose 6-phosphate from N-acetylneuraminate: step 3/5. In terms of biological role, converts N-acetylmannosamine-6-phosphate (ManNAc-6-P) to N-acetylglucosamine-6-phosphate (GlcNAc-6-P). The protein is Putative N-acetylmannosamine-6-phosphate 2-epimerase of Yersinia pseudotuberculosis serotype IB (strain PB1/+).